Here is a 301-residue protein sequence, read N- to C-terminus: Rhodopsin (301 aa).

At 1–18 (LHMIHLHWYQYPPMNPMM) the chain is on the extracellular side. Residues 19–43 (YPLLLIFMLFTGILCLAGNFVTIWV) form a helical membrane-spanning segment. The Cytoplasmic segment spans residues 44 to 55 (FMNTKSLRTPAN). The helical transmembrane segment at 56–78 (LLVVNLAMSDFLMMFTMFPPMMV) threads the bilayer. Over 79 to 92 (TCYYHTWTLGPTFC) the chain is Extracellular. Cys-92 and Cys-169 are oxidised to a cystine. Residues 93-115 (QVYAFLGNLCGCASIWTMVFITF) form a helical membrane-spanning segment. The 'Ionic lock' involved in activated form stabilization motif lies at 116 to 118 (DRY). The Cytoplasmic segment spans residues 116-134 (DRYNVIVKGVAGEPLSTKK). Residues 135–155 (ASLWILSVWVLSTAWCIAPFF) form a helical membrane-spanning segment. The Extracellular segment spans residues 156–182 (GWNHYVPEGNLTGCGTDYLSEDILSRS). N-linked (GlcNAc...) asparagine glycosylation is present at Asn-165. The chain crosses the membrane as a helical span at residues 183–204 (YLYIYSTWVYFLPLAITIYCYV). Residues 205 to 245 (FIIKAVAAHEKGMRDQAKKMGIKSLRNEEAQKTSAECRLAK) lie on the Cytoplasmic side of the membrane. Residues 246-267 (NAMTTVALWFIAWTPCLLINWV) traverse the membrane as a helical segment. At 268 to 278 (GMFARSYLSPV) the chain is on the extracellular side. A helical transmembrane segment spans residues 279-300 (YTIWGYVFAKANAVYNPIVYAI). The residue at position 288 (Lys-288) is an N6-(retinylidene)lysine.

It belongs to the G-protein coupled receptor 1 family. Opsin subfamily. In terms of assembly, homodimer. Interacts with GNAQ. In terms of processing, contains one covalently linked retinal chromophore.

The protein localises to the cell projection. The protein resides in the rhabdomere membrane. Its function is as follows. Photoreceptor required for image-forming vision at low light intensity. Can use both retinal and 3-dehydroretinal as visual pigment. Light-induced isomerization of 11-cis to all-trans retinal triggers a conformational change that activates signaling via G-proteins. Signaling via GNAQ probably mediates the activation of phospholipase C. The polypeptide is Rhodopsin (RHO) (Cambarus hubrichti (Salem cave crayfish)).